Reading from the N-terminus, the 66-residue chain is U-scoloptoxin(04)-Ssd2a (66 aa).

Positions 1–19 (MKAIYILSVLLLMMLPILS) are cleaved as a signal peptide.

It belongs to the scoloptoxin-04 family. In terms of processing, contains 2 disulfide bonds. In terms of tissue distribution, expressed by the venom gland.

The protein resides in the secreted. This Scolopendra dehaani (Thai centipede) protein is U-scoloptoxin(04)-Ssd2a.